We begin with the raw amino-acid sequence, 595 residues long: MATELLCLHRPISLTHKLFRNPLPKVIQATPLTLKLRCSVSTENVSFTETETEARRSANYEPNSWDYDFLLSSDTDESIEVYKDKAKKLEAEVRREINNEKAEFLTLLELIDNVQRLGLGYRFESDIRRALDRFVSSGGFDGVTKTSLHATALSFRLLRQHGFEVSQEAFSGFKDQNGNFLENLKEDTKAILSLYEASFLALEGENILDEARVFAISHLKELSEEKIGKELAEQVNHALELPLHRRTQRLEAVWSIEAYRKKEDANQVLLELAILDYNMIQSVYQRDLRETSRWWRRVGLATKLHFAKDRLIESFYWAVGVAFEPQYSDCRNSVAKMFSFVTIIDDIYDVYGTLDELELFTDAVERWDVNAINDLPDYMKLCFLALYNTINEIAYDNLKDKGENILPYLTKAWADLCNAFLQEAKWLYNKSTPTFDDYFGNAWKSSSGPLQLIFAYFAVVQNIKKEEIENLQKYHDIISRPSHIFRLCNDLASASAEIARGETANSVSCYMRTKGISEELATESVMNLIDETCKKMNKEKLGGSLFAKPFVETAINLARQSHCTYHNGDAHTSPDELTRKRVLSVITEPILPFER.

The transit peptide at 1–37 (MATELLCLHRPISLTHKLFRNPLPKVIQATPLTLKLR) directs the protein to the chloroplast. D345 serves as a coordination point for dimethylallyl diphosphate. 2 residues coordinate Mg(2+): D345 and D349. Residues 345–349 (DDIYD) carry the DDXXD motif motif. Dimethylallyl diphosphate contacts are provided by E423, R486, and N489. 3 residues coordinate Mg(2+): N489, S493, and E497.

The protein belongs to the terpene synthase family. Tpsb subfamily. In terms of assembly, homodimer. Mg(2+) is required as a cofactor. Requires Mn(2+) as cofactor.

It is found in the plastid. The protein resides in the chloroplast. It carries out the reaction dimethylallyl diphosphate = isoprene + diphosphate. Its pathway is secondary metabolite biosynthesis; terpenoid biosynthesis. With respect to regulation, competitive inhibition is mediated by geranyl diphosphate (GPP). In terms of biological role, lyase that catalyzes the formation of isoprene from dimethylallyl diphosphate via a syn-periplanar elimination mechanism in which the diphosphate-leaving group serves as a general base. The polypeptide is Isoprene synthase, chloroplastic (Populus canescens (Grey poplar)).